Reading from the N-terminus, the 263-residue chain is Ribosomal RNA small subunit methyltransferase A (263 aa).

Residues N20, L22, G47, E68, D90, and N111 each coordinate S-adenosyl-L-methionine.

This sequence belongs to the class I-like SAM-binding methyltransferase superfamily. rRNA adenine N(6)-methyltransferase family. RsmA subfamily.

It localises to the cytoplasm. The enzyme catalyses adenosine(1518)/adenosine(1519) in 16S rRNA + 4 S-adenosyl-L-methionine = N(6)-dimethyladenosine(1518)/N(6)-dimethyladenosine(1519) in 16S rRNA + 4 S-adenosyl-L-homocysteine + 4 H(+). Its function is as follows. Specifically dimethylates two adjacent adenosines (A1518 and A1519) in the loop of a conserved hairpin near the 3'-end of 16S rRNA in the 30S particle. May play a critical role in biogenesis of 30S subunits. The protein is Ribosomal RNA small subunit methyltransferase A of Chlorobium chlorochromatii (strain CaD3).